A 411-amino-acid polypeptide reads, in one-letter code: MATINDNYLKLKAGYLFPEIARRVNTFIEANPEAKIIKLGIGDVTEPLPEACRTAMIKAVEDMGDRSSFKGYGPEQGYGWLREKIAAQDFQARGCDIDASEIFVSDGAKCDTGNILDIFGKNNKIAVTDPVYPVYVDTNVMAGHTGETNEKGEYEGLVYLPISADNHFVADIPSEKVDLIYLCFPNNPTGATATKEYLKAWVDYATANDSIIFFDAAYEAFITDESLPHSIYEIEGAKDCAIEFRSFSKNAGFTGTRCAFTVVPKQLTAKASDGSQVELWKLWNRRQSTKFNGVSYIVQRGAEAVYSEAGKAQIKGLVSFYLENAKIICEQLKSAGFEVYGGVNAPYIWLKTPHNLSSWDFFDKLLQTTHVVGTPGSGFGAAGEGYFRISAFNSRENVEEAMKRITQAFKV.

Substrate contacts are provided by Tyr-15 and Gly-42. Pyridoxal 5'-phosphate-binding positions include Tyr-72, 108 to 109 (AK), Tyr-132, Asn-187, Tyr-218, and 246 to 248 (SFS). The substrate site is built by Lys-109, Tyr-132, and Asn-187. Lys-249 bears the N6-(pyridoxal phosphate)lysine mark. Pyridoxal 5'-phosphate is bound by residues Arg-257 and Asn-292. Asn-292 and Arg-388 together coordinate substrate.

It belongs to the class-I pyridoxal-phosphate-dependent aminotransferase family. LL-diaminopimelate aminotransferase subfamily. In terms of assembly, homodimer. Pyridoxal 5'-phosphate is required as a cofactor.

It catalyses the reaction (2S,6S)-2,6-diaminopimelate + 2-oxoglutarate = (S)-2,3,4,5-tetrahydrodipicolinate + L-glutamate + H2O + H(+). It functions in the pathway amino-acid biosynthesis; L-lysine biosynthesis via DAP pathway; LL-2,6-diaminopimelate from (S)-tetrahydrodipicolinate (aminotransferase route): step 1/1. Its function is as follows. Involved in the synthesis of meso-diaminopimelate (m-DAP or DL-DAP), required for both lysine and peptidoglycan biosynthesis. Catalyzes the direct conversion of tetrahydrodipicolinate to LL-diaminopimelate. The protein is LL-diaminopimelate aminotransferase of Crocosphaera subtropica (strain ATCC 51142 / BH68) (Cyanothece sp. (strain ATCC 51142)).